A 308-amino-acid chain; its full sequence is Ribosomal RNA large subunit methyltransferase F (308 aa).

The protein belongs to the methyltransferase superfamily. METTL16/RlmF family.

Its subcellular location is the cytoplasm. It catalyses the reaction adenosine(1618) in 23S rRNA + S-adenosyl-L-methionine = N(6)-methyladenosine(1618) in 23S rRNA + S-adenosyl-L-homocysteine + H(+). Specifically methylates the adenine in position 1618 of 23S rRNA. The chain is Ribosomal RNA large subunit methyltransferase F from Escherichia coli (strain K12 / MC4100 / BW2952).